Consider the following 329-residue polypeptide: Phosphate acyltransferase (329 aa).

The protein belongs to the PlsX family. In terms of assembly, homodimer. Probably interacts with PlsY.

The protein localises to the cytoplasm. It catalyses the reaction a fatty acyl-[ACP] + phosphate = an acyl phosphate + holo-[ACP]. The protein operates within lipid metabolism; phospholipid metabolism. Functionally, catalyzes the reversible formation of acyl-phosphate (acyl-PO(4)) from acyl-[acyl-carrier-protein] (acyl-ACP). This enzyme utilizes acyl-ACP as fatty acyl donor, but not acyl-CoA. This is Phosphate acyltransferase from Exiguobacterium sp. (strain ATCC BAA-1283 / AT1b).